The primary structure comprises 312 residues: Glutaminase (312 aa).

Substrate contacts are provided by serine 67, asparagine 118, glutamate 162, asparagine 169, tyrosine 193, tyrosine 245, and valine 263.

It belongs to the glutaminase family. In terms of assembly, homotetramer.

It carries out the reaction L-glutamine + H2O = L-glutamate + NH4(+). This Bordetella avium (strain 197N) protein is Glutaminase.